The following is a 66-amino-acid chain: Large ribosomal subunit protein uL30 (66 aa).

It belongs to the universal ribosomal protein uL30 family. In terms of assembly, part of the 50S ribosomal subunit.

This is Large ribosomal subunit protein uL30 from Chelativorans sp. (strain BNC1).